The sequence spans 136 residues: Large-conductance mechanosensitive channel (136 aa).

Transmembrane regions (helical) follow at residues 10-30 and 76-96; these read FAMRGNVVDLAVGVIIGAAFG and GAFIQNIFDFVIVAFAIFIAI.

This sequence belongs to the MscL family. Homopentamer.

The protein localises to the cell inner membrane. Functionally, channel that opens in response to stretch forces in the membrane lipid bilayer. May participate in the regulation of osmotic pressure changes within the cell. The sequence is that of Large-conductance mechanosensitive channel from Pectobacterium atrosepticum (strain SCRI 1043 / ATCC BAA-672) (Erwinia carotovora subsp. atroseptica).